Here is a 288-residue protein sequence, read N- to C-terminus: NAD(P)H-hydrate epimerase (288 aa).

Residues 1 to 59 constitute a mitochondrion transit peptide; sequence MSGLRALLGLGLPVAGSRLPRVRVQAGACRARPTWWGPQRLISGGRGDVEGMASSAVKY. Residues 65-275 form the YjeF N-terminal domain; it reads AQAVDQELFN…ALEKKYQLNL (211 aa). A (6S)-NADPHX-binding site is contributed by 119 to 123; that stretch reads NNGGD. Asn120 is a K(+) binding site. Residue Lys144 is modified to N6-succinyllysine. Residue Asp185 participates in K(+) binding. Residues 189–195 and Asp218 each bind (6S)-NADPHX; that span reads GFSFKGE. Ser221 lines the K(+) pocket.

This sequence belongs to the NnrE/AIBP family. Homodimer. Interacts with APOA1 and APOA2. Requires K(+) as cofactor. Undergoes physiological phosphorylation during sperm capacitation, downstream to PKA activation.

It is found in the mitochondrion. It localises to the secreted. It catalyses the reaction (6R)-NADHX = (6S)-NADHX. The catalysed reaction is (6R)-NADPHX = (6S)-NADPHX. Catalyzes the epimerization of the S- and R-forms of NAD(P)HX, a damaged form of NAD(P)H that is a result of enzymatic or heat-dependent hydration. This is a prerequisite for the S-specific NAD(P)H-hydrate dehydratase to allow the repair of both epimers of NAD(P)HX. Accelerates cholesterol efflux from endothelial cells to high-density lipoprotein (HDL) and thereby regulates angiogenesis. The sequence is that of NAD(P)H-hydrate epimerase from Sus scrofa (Pig).